Consider the following 592-residue polypeptide: Tetrathionate sensor histidine kinase TtrS (592 aa).

2 consecutive transmembrane segments (helical) span residues 11–31 (VLAA…NIGI) and 307–327 (VGGV…VMLL). A Histidine kinase domain is found at 364–581 (GFAHELNQPL…VVTIHFLHEN (218 aa)). Histidine 367 bears the Phosphohistidine; by autocatalysis mark.

Post-translationally, autophosphorylated.

The protein resides in the cell inner membrane. It catalyses the reaction ATP + protein L-histidine = ADP + protein N-phospho-L-histidine.. Functionally, member of the two-component regulatory system TtrR/TtrS, which is required for synthesis of tetrathionate reductase. Probably functions as a sensor protein kinase which is autophosphorylated at a histidine residue in response to tetrathionate, and transfers its phosphate group to TtrR. During mice infection, the ability to use tetrathionate as an electron acceptor is a growth advantage for S.typhimurium over the competing microbiota in the lumen of the inflamed gut. The polypeptide is Tetrathionate sensor histidine kinase TtrS (ttrS) (Salmonella typhimurium (strain LT2 / SGSC1412 / ATCC 700720)).